Consider the following 217-residue polypeptide: Small ribosomal subunit protein uS3 (217 aa).

A KH type-2 domain is found at 40–110 (IRDLINNSFN…EVYINIHEVR (71 aa)).

Belongs to the universal ribosomal protein uS3 family. As to quaternary structure, part of the 30S ribosomal subunit. Forms a tight complex with proteins S10 and S14.

Its function is as follows. Binds the lower part of the 30S subunit head. Binds mRNA in the 70S ribosome, positioning it for translation. The polypeptide is Small ribosomal subunit protein uS3 (Rickettsia canadensis (strain McKiel)).